Here is a 124-residue protein sequence, read N- to C-terminus: MATVNQLVRKPRAPKVDKTNVPALAACPQKRGVCTRVYTTTPKKPNSALRKVARVRLTNGFEVTSYIGGEGHNLQEHSVILIRGGRVKDLPGVRYHTVRGALDCAGVSERRQGRSKYGAKRPKS.

Asp89 bears the 3-methylthioaspartic acid mark.

This sequence belongs to the universal ribosomal protein uS12 family. In terms of assembly, part of the 30S ribosomal subunit. Contacts proteins S8 and S17. May interact with IF1 in the 30S initiation complex.

With S4 and S5 plays an important role in translational accuracy. Its function is as follows. Interacts with and stabilizes bases of the 16S rRNA that are involved in tRNA selection in the A site and with the mRNA backbone. Located at the interface of the 30S and 50S subunits, it traverses the body of the 30S subunit contacting proteins on the other side and probably holding the rRNA structure together. The combined cluster of proteins S8, S12 and S17 appears to hold together the shoulder and platform of the 30S subunit. This chain is Small ribosomal subunit protein uS12, found in Shewanella halifaxensis (strain HAW-EB4).